The sequence spans 937 residues: Bifunctional glutamine synthetase adenylyltransferase/adenylyl-removing enzyme (937 aa).

Residues 1–436 (MSQPIPSASP…AAEFAELLAP (436 aa)) are adenylyl removase. The interval 443 to 937 (PDTLADYWRA…QLRFQPGKGA (495 aa)) is adenylyl transferase.

This sequence belongs to the GlnE family. Mg(2+) serves as cofactor.

The catalysed reaction is [glutamine synthetase]-O(4)-(5'-adenylyl)-L-tyrosine + phosphate = [glutamine synthetase]-L-tyrosine + ADP. The enzyme catalyses [glutamine synthetase]-L-tyrosine + ATP = [glutamine synthetase]-O(4)-(5'-adenylyl)-L-tyrosine + diphosphate. Functionally, involved in the regulation of glutamine synthetase GlnA, a key enzyme in the process to assimilate ammonia. When cellular nitrogen levels are high, the C-terminal adenylyl transferase (AT) inactivates GlnA by covalent transfer of an adenylyl group from ATP to specific tyrosine residue of GlnA, thus reducing its activity. Conversely, when nitrogen levels are low, the N-terminal adenylyl removase (AR) activates GlnA by removing the adenylyl group by phosphorolysis, increasing its activity. The regulatory region of GlnE binds the signal transduction protein PII (GlnB) which indicates the nitrogen status of the cell. The protein is Bifunctional glutamine synthetase adenylyltransferase/adenylyl-removing enzyme of Xanthomonas campestris pv. campestris (strain ATCC 33913 / DSM 3586 / NCPPB 528 / LMG 568 / P 25).